Reading from the N-terminus, the 280-residue chain is 4-deoxy-L-threo-5-hexosulose-uronate ketol-isomerase 1 (280 aa).

His198, His200, Glu205, and His247 together coordinate Zn(2+).

The protein belongs to the KduI family. Zn(2+) serves as cofactor.

The enzyme catalyses 5-dehydro-4-deoxy-D-glucuronate = 3-deoxy-D-glycero-2,5-hexodiulosonate. It participates in glycan metabolism; pectin degradation; 2-dehydro-3-deoxy-D-gluconate from pectin: step 4/5. Catalyzes the isomerization of 5-dehydro-4-deoxy-D-glucuronate to 3-deoxy-D-glycero-2,5-hexodiulosonate. The polypeptide is 4-deoxy-L-threo-5-hexosulose-uronate ketol-isomerase 1 (kduI1) (Rhizobium meliloti (strain 1021) (Ensifer meliloti)).